The primary structure comprises 198 residues: Na(+)-translocating NADH-quinone reductase subunit E (198 aa).

Helical transmembrane passes span Ala-11–Val-31, Val-35–Ile-55, Phe-77–Ile-97, Gly-110–Val-130, Ile-140–Ile-160, and Leu-176–Val-196.

This sequence belongs to the NqrDE/RnfAE family. Composed of six subunits; NqrA, NqrB, NqrC, NqrD, NqrE and NqrF.

The protein resides in the cell inner membrane. The enzyme catalyses a ubiquinone + n Na(+)(in) + NADH + H(+) = a ubiquinol + n Na(+)(out) + NAD(+). NQR complex catalyzes the reduction of ubiquinone-1 to ubiquinol by two successive reactions, coupled with the transport of Na(+) ions from the cytoplasm to the periplasm. NqrA to NqrE are probably involved in the second step, the conversion of ubisemiquinone to ubiquinol. This chain is Na(+)-translocating NADH-quinone reductase subunit E, found in Klebsiella pneumoniae subsp. pneumoniae (strain ATCC 700721 / MGH 78578).